The primary structure comprises 524 residues: 2-isopropylmalate synthase (524 aa).

The 263-residue stretch at 5-267 (VIIFDTTLRD…HTNINHQEIF (263 aa)) folds into the Pyruvate carboxyltransferase domain. 4 residues coordinate Mn(2+): Asp14, His202, His204, and Asn238. A regulatory domain region spans residues 392 to 524 (SLDYFSVQSG…SKHQNNQETV (133 aa)).

The protein belongs to the alpha-IPM synthase/homocitrate synthase family. LeuA type 1 subfamily. In terms of assembly, homodimer. Requires Mn(2+) as cofactor.

It is found in the cytoplasm. The catalysed reaction is 3-methyl-2-oxobutanoate + acetyl-CoA + H2O = (2S)-2-isopropylmalate + CoA + H(+). It participates in amino-acid biosynthesis; L-leucine biosynthesis; L-leucine from 3-methyl-2-oxobutanoate: step 1/4. Functionally, catalyzes the condensation of the acetyl group of acetyl-CoA with 3-methyl-2-oxobutanoate (2-ketoisovalerate) to form 3-carboxy-3-hydroxy-4-methylpentanoate (2-isopropylmalate). This Serratia proteamaculans (strain 568) protein is 2-isopropylmalate synthase.